Consider the following 304-residue polypeptide: Sulfate adenylyltransferase subunit 2 (304 aa).

This sequence belongs to the PAPS reductase family. CysD subfamily. As to quaternary structure, heterodimer composed of CysD, the smaller subunit, and CysN.

It catalyses the reaction sulfate + ATP + H(+) = adenosine 5'-phosphosulfate + diphosphate. The protein operates within sulfur metabolism; hydrogen sulfide biosynthesis; sulfite from sulfate: step 1/3. Its function is as follows. With CysN forms the ATP sulfurylase (ATPS) that catalyzes the adenylation of sulfate producing adenosine 5'-phosphosulfate (APS) and diphosphate, the first enzymatic step in sulfur assimilation pathway. APS synthesis involves the formation of a high-energy phosphoric-sulfuric acid anhydride bond driven by GTP hydrolysis by CysN coupled to ATP hydrolysis by CysD. The protein is Sulfate adenylyltransferase subunit 2 of Acinetobacter baumannii (strain SDF).